The primary structure comprises 129 residues: UPF0325 protein SG1947 (129 aa).

This sequence belongs to the UPF0325 family.

This chain is UPF0325 protein SG1947, found in Sodalis glossinidius (strain morsitans).